Here is a 117-residue protein sequence, read N- to C-terminus: Large ribosomal subunit protein bL20c (117 aa).

The protein belongs to the bacterial ribosomal protein bL20 family.

It is found in the plastid. The protein localises to the chloroplast. Its function is as follows. Binds directly to 23S ribosomal RNA and is necessary for the in vitro assembly process of the 50S ribosomal subunit. It is not involved in the protein synthesizing functions of that subunit. The sequence is that of Large ribosomal subunit protein bL20c from Acorus calamus (Sweet flag).